Consider the following 218-residue polypeptide: Uracil-DNA glycosylase (218 aa).

D68 (proton acceptor) is an active-site residue.

The protein belongs to the uracil-DNA glycosylase (UDG) superfamily. UNG family. As to quaternary structure, homodimer. Interacts with protein OPG148. Component of the Uracil-DNA glycosylase(UDG)-OPG148-polymerase complex; OPG148 and UDG form a heterodimeric processivity factor that associates with OPG71 to form the processive polymerase holoenzyme.

The catalysed reaction is Hydrolyzes single-stranded DNA or mismatched double-stranded DNA and polynucleotides, releasing free uracil.. Functionally, plays an essential role in viral replication as a component of the DNA polymerase processivity factor. Excises uracil residues from the DNA which can arise as a result of misincorporation of dUMP residues by DNA polymerase or due to deamination of cytosine. This chain is Uracil-DNA glycosylase (OPG116), found in Variola virus.